The sequence spans 100 residues: Small ribosomal subunit protein bS20 (100 aa).

Residues 1 to 20 show a composition bias toward basic residues; sequence MASGKPKKKNPRLASGRKRV. The disordered stretch occupies residues 1–21; sequence MASGKPKKKNPRLASGRKRVR.

The protein belongs to the bacterial ribosomal protein bS20 family.

Functionally, binds directly to 16S ribosomal RNA. In Albidiferax ferrireducens (strain ATCC BAA-621 / DSM 15236 / T118) (Rhodoferax ferrireducens), this protein is Small ribosomal subunit protein bS20.